The sequence spans 580 residues: uncharacterized protein (580 aa).

Residues 1–44 show a composition bias toward polar residues; that stretch reads MSESSVNADTPKNTNDVLNGAYQSATTEPEGQYRSATDNPSLYQ. Positions 1-45 are disordered; sequence MSESSVNADTPKNTNDVLNGAYQSATTEPEGQYRSATDNPSLYQV. The residue at position 99 (S99) is a Phosphoserine. The next 12 membrane-spanning stretches (helical) occupy residues 143–163, 177–197, 207–227, 235–255, 265–285, 295–315, 370–390, 405–425, 450–470, 476–496, 511–533, and 546–566; these read IYAYASLTIAWGSSVLSPASA, LLNVSLFMLGYCLGPICWAPM, LYIGLFLFSVFQIAVATAQDI, FFGGYGACVPLCVVAAAFADM, ITIFAAVIFVGPLVAPIVGGF, WTEYITSFMGFLSIILIYLFC, PIVFLVSLYCSFVYAIIYLLL, LGVSALPYIGILVGVFIGCGI, LPPMMIGSFLFPAGIFWLAWS, VHWIVPTLSGLLTGAGILLIF, AASVFAANVIMRSAVAGGFPLFA, and GSLLGFIATALIPMPFAFFFF.

It belongs to the major facilitator superfamily. CAR1 family.

Its subcellular location is the membrane. This is an uncharacterized protein from Schizosaccharomyces pombe (strain 972 / ATCC 24843) (Fission yeast).